A 142-amino-acid chain; its full sequence is Regulator of ribonuclease activity B (142 aa).

The interval 117–142 (PNADEDEYGEDGEFFDDEFADDDEKR) is disordered.

The protein belongs to the RraB family. Interacts with the C-terminal region of Rne.

It is found in the cytoplasm. Functionally, globally modulates RNA abundance by binding to RNase E (Rne) and regulating its endonucleolytic activity. Can modulate Rne action in a substrate-dependent manner by altering the composition of the degradosome. This Actinobacillus succinogenes (strain ATCC 55618 / DSM 22257 / CCUG 43843 / 130Z) protein is Regulator of ribonuclease activity B.